The following is a 572-amino-acid chain: MEYWKHTNHGKDACNELGTSMATHGNKITNKITYILWTIILVLLSIIFIIVLINSIKSEKAHESLLQDVNNEFMEVTEKIQMASDNINDLIQSGVNTRLLTIQSHVQNYIPISLTQQMSDLRKFISEITIRNDNQEVPPQRITHDVGIKPLNPDDFWRCTSGLPSLMKTPKIRLMPGPGLLAMPTTVDGCVRTPSLVINDLIYAYTSNLITRGCQDIGKSYQVLQIGIITVNSDLVPDLNPRISHTFNINDNRKSCSLALLNTDVYQLCSTPKVDERSDYASSGIEDIVLDIVNHDGSISTTRFKNNNISFDQPYAALYPSVGPGIYYKGKIIFLGYGGLEHPINENAICNTTGCPGKTQRDCNQASHSPWFSDRRMVNSIIVVDKGLNSIPKLKVWTISMRQNYWGSEGRLLLLGNKIYIYTRSTSWHSKLQLGIIDITDYSDIRIKWTWHNVLSRPGNNECPWGHSCPDGCITGVYTDAYPLNPTGSIVSSVILDSQKTRVNPVITYSTATERVNELAIRNKTLSAGYTTTSCITHYNKGYCFHIVEINHKSLDTFQPMLFKTEIPKSCS.

Over 1-31 (MEYWKHTNHGKDACNELGTSMATHGNKITNK) the chain is Intravirion. Residues 32 to 52 (ITYILWTIILVLLSIIFIIVL) traverse the membrane as a helical segment. The Virion surface portion of the chain corresponds to 53-572 (INSIKSEKAH…FKTEIPKSCS (520 aa)). Disulfide bonds link Cys-190/Cys-214 and Cys-256/Cys-269. Residues 252-257 (NRKSCS) are involved in neuraminidase activity. N-linked (GlcNAc...) asparagine; by host glycosylation is found at Asn-308 and Asn-351. 2 cysteine pairs are disulfide-bonded: Cys-355-Cys-469 and Cys-463-Cys-473. The N-linked (GlcNAc...) asparagine; by host glycan is linked to Asn-523. A disulfide bond links Cys-535 and Cys-544.

This sequence belongs to the paramyxoviruses hemagglutinin-neuraminidase family. Homotetramer; composed of disulfide-linked homodimers. Interacts with F protein trimer.

The protein resides in the virion membrane. Its subcellular location is the host cell membrane. It carries out the reaction Hydrolysis of alpha-(2-&gt;3)-, alpha-(2-&gt;6)-, alpha-(2-&gt;8)- glycosidic linkages of terminal sialic acid residues in oligosaccharides, glycoproteins, glycolipids, colominic acid and synthetic substrates.. Its function is as follows. Attaches the virus to sialic acid-containing cell receptors and thereby initiating infection. Binding of HN protein to the receptor induces a conformational change that allows the F protein to trigger virion/cell membranes fusion. Neuraminidase activity ensures the efficient spread of the virus by dissociating the mature virions from the neuraminic acid containing glycoproteins. The protein is Hemagglutinin-neuraminidase (HN) of Homo sapiens (Human).